A 217-amino-acid polypeptide reads, in one-letter code: 7-cyano-7-deazaguanine synthase (217 aa).

Residue Phe10–Leu20 coordinates ATP. Positions 185, 194, 197, and 200 each coordinate Zn(2+).

Belongs to the QueC family. As to quaternary structure, homodimer. It depends on Zn(2+) as a cofactor.

It carries out the reaction 7-carboxy-7-deazaguanine + NH4(+) + ATP = 7-cyano-7-deazaguanine + ADP + phosphate + H2O + H(+). It functions in the pathway purine metabolism; 7-cyano-7-deazaguanine biosynthesis. Functionally, catalyzes the ATP-dependent conversion of 7-carboxy-7-deazaguanine (CDG) to 7-cyano-7-deazaguanine (preQ(0)). This chain is 7-cyano-7-deazaguanine synthase, found in Streptococcus thermophilus (strain ATCC BAA-491 / LMD-9).